A 507-amino-acid chain; its full sequence is Trigger factor (507 aa).

The PPIase FKBP-type domain occupies 162 to 243 (GDFVSLDLSA…VRGVKEKELP (82 aa)). The segment at 434-507 (NLPRRPSGEA…DSELPASETK (74 aa)) is disordered. The span at 442–460 (EAEDDVRDISDELDAEELE) shows a compositional bias: acidic residues. The span at 461–488 (VPAAAPSAEVTAAAGDEATATATATDAD) shows a compositional bias: low complexity.

Belongs to the FKBP-type PPIase family. Tig subfamily.

It is found in the cytoplasm. The enzyme catalyses [protein]-peptidylproline (omega=180) = [protein]-peptidylproline (omega=0). In terms of biological role, involved in protein export. Acts as a chaperone by maintaining the newly synthesized protein in an open conformation. Functions as a peptidyl-prolyl cis-trans isomerase. The polypeptide is Trigger factor (Parafrankia sp. (strain EAN1pec)).